We begin with the raw amino-acid sequence, 260 residues long: ATP synthase subunit a (260 aa).

6 helical membrane passes run 37–57 (FTNASLWMVVTVVAIGLFMTL), 95–115 (FFPFIFSLFMFIFFANMIGMF), 125–145 (IVVTFALAIVVFLGVTLTGFV), 154–174 (VFVPSGVPMALLPLVVAIEII), 191–211 (MLAGHIMLKVFAGFVLTFMTM), and 233–253 (EFLVAALQAYVFTILTCMYLH).

It belongs to the ATPase A chain family. F-type ATPases have 2 components, CF(1) - the catalytic core - and CF(0) - the membrane proton channel. CF(1) has five subunits: alpha(3), beta(3), gamma(1), delta(1), epsilon(1). CF(0) has three main subunits: a(1), b(2) and c(9-12). The alpha and beta chains form an alternating ring which encloses part of the gamma chain. CF(1) is attached to CF(0) by a central stalk formed by the gamma and epsilon chains, while a peripheral stalk is formed by the delta and b chains.

The protein resides in the cell inner membrane. Its function is as follows. Key component of the proton channel; it plays a direct role in the translocation of protons across the membrane. This is ATP synthase subunit a from Parvibaculum lavamentivorans (strain DS-1 / DSM 13023 / NCIMB 13966).